A 152-amino-acid chain; its full sequence is Proline-rich acidic protein 1 (152 aa).

The signal sequence occupies residues 1-20 (MKRFLLATCLVAVLLWEAGA).

In terms of assembly, interacts with MTTP. Interacts with MAD1L1. Highly expressed in the small intestine where it shows a proximal-distal graded expression.

The protein localises to the secreted. The protein resides in the endoplasmic reticulum. In terms of biological role, lipid-binding protein which promotes lipid absorption by facilitating MTTP-mediated lipid transfer (mainly triglycerides and phospholipids) and MTTP-mediated apoB lipoprotein assembly and secretion. Protects the gastrointestinal epithelium from irradiation-induced apoptosis. May play an important role in maintaining normal growth homeostasis in epithelial cells. Involved in p53/TP53-dependent cell survival after DNA damage. This Rattus norvegicus (Rat) protein is Proline-rich acidic protein 1 (Prap1).